Consider the following 346-residue polypeptide: UPF0425 pyridoxal phosphate-dependent protein MK0620 (346 aa).

Residue lysine 206 is modified to N6-(pyridoxal phosphate)lysine.

Pyridoxal 5'-phosphate is required as a cofactor.

The sequence is that of UPF0425 pyridoxal phosphate-dependent protein MK0620 from Methanopyrus kandleri (strain AV19 / DSM 6324 / JCM 9639 / NBRC 100938).